The primary structure comprises 348 residues: D-erythrose-4-phosphate dehydrogenase (348 aa).

NAD(+) contacts are provided by residues 12–13 (RI) and Arg81. Residues 154-156 (SCT), Arg200, 213-214 (TK), and Arg236 contribute to the substrate site. Catalysis depends on Cys155, which acts as the Nucleophile. Residue Asn318 coordinates NAD(+).

This sequence belongs to the glyceraldehyde-3-phosphate dehydrogenase family. Epd subfamily. As to quaternary structure, homotetramer.

The protein localises to the cytoplasm. The enzyme catalyses D-erythrose 4-phosphate + NAD(+) + H2O = 4-phospho-D-erythronate + NADH + 2 H(+). Its pathway is cofactor biosynthesis; pyridoxine 5'-phosphate biosynthesis; pyridoxine 5'-phosphate from D-erythrose 4-phosphate: step 1/5. Catalyzes the NAD-dependent conversion of D-erythrose 4-phosphate to 4-phosphoerythronate. The protein is D-erythrose-4-phosphate dehydrogenase of Salmonella gallinarum (strain 287/91 / NCTC 13346).